A 239-amino-acid polypeptide reads, in one-letter code: MSLLWQARFFTTVNHLRDLPNTQVPEIAFAGRSNAGKSTAINILSNQKKLCFASKTPGRTQHINYFSIGGAHVGQHRKDETKVEEIRAMLVDLPGYGYAEVSGSAKHHWQALLGDYVQRREQLAALVLIVDSRRPFTDLDIQMLEWFAPTGKPIHCILTKSDKLNRNESTNALRTANTLLASYVDEYGQPFPFTAQLFSALKRTGIDEANDKILELLGLNDEVSEESDSKTAGDAEKAE.

Residues 23–219 (QVPEIAFAGR…NDKILELLGL (197 aa)) form the EngB-type G domain. Residues 31–38 (GRSNAGKS), 58–62 (GRTQH), 92–95 (DLPG), 159–162 (TKSD), and 193–200 (FTAQLFSA) each bind GTP. Residues Ser-38 and Thr-60 each contribute to the Mg(2+) site.

It belongs to the TRAFAC class TrmE-Era-EngA-EngB-Septin-like GTPase superfamily. EngB GTPase family. The cofactor is Mg(2+).

Necessary for normal cell division and for the maintenance of normal septation. The chain is Probable GTP-binding protein EngB from Herminiimonas arsenicoxydans.